Here is a 172-residue protein sequence, read N- to C-terminus: Adenine phosphoribosyltransferase (172 aa).

This sequence belongs to the purine/pyrimidine phosphoribosyltransferase family. Homodimer.

The protein localises to the cytoplasm. The catalysed reaction is AMP + diphosphate = 5-phospho-alpha-D-ribose 1-diphosphate + adenine. Its pathway is purine metabolism; AMP biosynthesis via salvage pathway; AMP from adenine: step 1/1. In terms of biological role, catalyzes a salvage reaction resulting in the formation of AMP, that is energically less costly than de novo synthesis. This Clostridium acetobutylicum (strain ATCC 824 / DSM 792 / JCM 1419 / IAM 19013 / LMG 5710 / NBRC 13948 / NRRL B-527 / VKM B-1787 / 2291 / W) protein is Adenine phosphoribosyltransferase.